The sequence spans 816 residues: uncharacterized protein (816 aa).

503–534 contributes to the NADP(+) binding site; sequence DTWTVITGGTDGIGKAYIEELCKTRGLKKFYL. Position 641 (serine 641) interacts with substrate. Tyrosine 661 functions as the Proton acceptor in the catalytic mechanism. 2 helical membrane passes run 743-763 and 777-797; these read FGFS…SIVL and VFII…FLLN.

Belongs to the short-chain dehydrogenases/reductases (SDR) family.

It is found in the membrane. This is an uncharacterized protein from Caenorhabditis elegans.